The following is a 417-amino-acid chain: Probable secreted beta-glucosidase PSU1 (417 aa).

The signal sequence occupies residues 1 to 18 (MRFFETLALALLTTGALA).

It belongs to the SUN family.

It localises to the secreted. It is found in the cell wall. Its function is as follows. Involved in cell wall synthesis. May be required for the activation of 1,3-beta-glucan synthase. The chain is Probable secreted beta-glucosidase PSU1 (psu1) from Schizosaccharomyces pombe (strain 972 / ATCC 24843) (Fission yeast).